A 60-amino-acid polypeptide reads, in one-letter code: Large ribosomal subunit protein uL30 (60 aa).

This sequence belongs to the universal ribosomal protein uL30 family. As to quaternary structure, part of the 50S ribosomal subunit.

This is Large ribosomal subunit protein uL30 from Idiomarina loihiensis (strain ATCC BAA-735 / DSM 15497 / L2-TR).